Consider the following 384-residue polypeptide: 1-deoxy-D-xylulose 5-phosphate reductoisomerase (384 aa).

NADPH is bound by residues Thr-10, Gly-11, Ser-12, Ile-13, Arg-37, Asn-38, and Asn-124. Lys-125 serves as a coordination point for 1-deoxy-D-xylulose 5-phosphate. Glu-126 is a binding site for NADPH. Asp-150 is a binding site for Mn(2+). The 1-deoxy-D-xylulose 5-phosphate site is built by Ser-151, Glu-152, Ser-176, and His-199. Position 152 (Glu-152) interacts with Mn(2+). Residue Gly-205 participates in NADPH binding. 1-deoxy-D-xylulose 5-phosphate contacts are provided by Ser-212, Asn-217, Lys-218, and Glu-221. Glu-221 provides a ligand contact to Mn(2+).

This sequence belongs to the DXR family. The cofactor is Mg(2+). Mn(2+) is required as a cofactor.

It catalyses the reaction 2-C-methyl-D-erythritol 4-phosphate + NADP(+) = 1-deoxy-D-xylulose 5-phosphate + NADPH + H(+). It participates in isoprenoid biosynthesis; isopentenyl diphosphate biosynthesis via DXP pathway; isopentenyl diphosphate from 1-deoxy-D-xylulose 5-phosphate: step 1/6. In terms of biological role, catalyzes the NADPH-dependent rearrangement and reduction of 1-deoxy-D-xylulose-5-phosphate (DXP) to 2-C-methyl-D-erythritol 4-phosphate (MEP). The protein is 1-deoxy-D-xylulose 5-phosphate reductoisomerase of Clostridium perfringens (strain SM101 / Type A).